The sequence spans 245 residues: MYRYKISVEYLGTNLAGWQRQSGVMSVQQILEEAIYKFSGEQVTLFGSGRTDAGVHAIGQIAHFDLSKYFEPYKIIRAINYFTRPYIVGVCNCELVDNNFHARFSAIARHYVYRILNRPYPSVIDFDRVWWISVPLDVSAMQKSSLYLLGKHNFTSFRASSCQSKSPIKTLTKLDIIKENEEIKLYFSAPSFLHHMVRNIVGSLVLVGKNIWQAEQMQQVLEVADRKAAGPTAPACGLYFIKADY.

The Nucleophile role is filled by aspartate 52. Residue tyrosine 111 participates in substrate binding.

The protein belongs to the tRNA pseudouridine synthase TruA family. As to quaternary structure, homodimer.

It carries out the reaction uridine(38/39/40) in tRNA = pseudouridine(38/39/40) in tRNA. Its function is as follows. Formation of pseudouridine at positions 38, 39 and 40 in the anticodon stem and loop of transfer RNAs. The chain is tRNA pseudouridine synthase A from Rickettsia bellii (strain RML369-C).